The primary structure comprises 350 residues: Lipase chaperone (350 aa).

A helical transmembrane segment spans residues 12-32 (IVLYLILGCVVVCGVWYSFDV).

Belongs to the lipase chaperone family.

Its subcellular location is the cell inner membrane. In terms of biological role, may be involved in the folding of the extracellular lipase during its passage through the periplasm. This is Lipase chaperone (lifO) from Xylella fastidiosa (strain 9a5c).